The chain runs to 117 residues: Large ribosomal subunit protein uL18 (117 aa).

Belongs to the universal ribosomal protein uL18 family. In terms of assembly, part of the 50S ribosomal subunit; part of the 5S rRNA/L5/L18/L25 subcomplex. Contacts the 5S and 23S rRNAs.

Its function is as follows. This is one of the proteins that bind and probably mediate the attachment of the 5S RNA into the large ribosomal subunit, where it forms part of the central protuberance. The protein is Large ribosomal subunit protein uL18 of Enterobacter sp. (strain 638).